The sequence spans 317 residues: 4-diphosphocytidyl-2-C-methyl-D-erythritol kinase (317 aa).

The active site involves Lys11. 99–109 (PVAAGLAGGST) lines the ATP pocket. The active site involves Asp141.

It belongs to the GHMP kinase family. IspE subfamily.

It catalyses the reaction 4-CDP-2-C-methyl-D-erythritol + ATP = 4-CDP-2-C-methyl-D-erythritol 2-phosphate + ADP + H(+). It participates in isoprenoid biosynthesis; isopentenyl diphosphate biosynthesis via DXP pathway; isopentenyl diphosphate from 1-deoxy-D-xylulose 5-phosphate: step 3/6. Its function is as follows. Catalyzes the phosphorylation of the position 2 hydroxy group of 4-diphosphocytidyl-2C-methyl-D-erythritol. The polypeptide is 4-diphosphocytidyl-2-C-methyl-D-erythritol kinase (Nostoc sp. (strain PCC 7120 / SAG 25.82 / UTEX 2576)).